A 270-amino-acid chain; its full sequence is MASNATDYIKHHLTFWNSDPSAGFWSLHVDTFSISLVLGFLFAAVFAMVARRASIEAPGRLQLFVEMIVELVQTQVREVFHGKSKMIAPLALTIFCWVFLMNFMDLFPVDLFPMAAQWIGYTFFGLEPHHVYFRVVPSADVNATFAMSLSVLILIVGFSIKAKGLGGWGKELLTAPFHSSNPVGAIILAPLNFAFQLVELAAKPISLSLRLFGNLYAGELIFILIALLPWGLQWVLGAPWAIFHILIITLQAFVFMMLTIVYLSLAVEAH.

The next 7 membrane-spanning stretches (helical) occupy residues 29 to 49, 87 to 107, 108 to 128, 140 to 160, 182 to 202, 220 to 240, and 241 to 261; these read VDTF…FAMV, IAPL…MDLF, PVDL…GLEP, DVNA…GFSI, PVGA…ELAA, LIFI…GAPW, and AIFH…LTIV.

Belongs to the ATPase A chain family. F-type ATPases have 2 components, CF(1) - the catalytic core - and CF(0) - the membrane proton channel. CF(1) has five subunits: alpha(3), beta(3), gamma(1), delta(1), epsilon(1). CF(0) has three main subunits: a(1), b(2) and c(9-12). The alpha and beta chains form an alternating ring which encloses part of the gamma chain. CF(1) is attached to CF(0) by a central stalk formed by the gamma and epsilon chains, while a peripheral stalk is formed by the delta and b chains.

The protein localises to the cell inner membrane. In terms of biological role, key component of the proton channel; it plays a direct role in the translocation of protons across the membrane. The chain is ATP synthase subunit a from Chromobacterium violaceum (strain ATCC 12472 / DSM 30191 / JCM 1249 / CCUG 213 / NBRC 12614 / NCIMB 9131 / NCTC 9757 / MK).